A 662-amino-acid chain; its full sequence is High affinity sulfate transporter 2 (662 aa).

The tract at residues 1 to 35 (MSQRVSDQAMAEVIAETRTNSSSRRHGGGDDTPSL) is disordered. 12 helical membrane-spanning segments follow: residues 103–123 (GDFI…LAYA), 128–148 (LDPW…AFMG), 153–173 (IAIG…SNEI), 182–202 (LRLA…LGVC), 205–225 (GFLI…GAAI), 264–284 (WETI…KYIA), 291–311 (FWVS…FVYI), 346–366 (AGVR…MAIG), 383–403 (MVAM…VTTG), 420–440 (VSNI…TPLF), 447–467 (VLAS…AMVL), and 481–501 (GAFF…AVAI). The 124-residue stretch at 532–655 (QYPKAEQIPG…LTVADAVATY (124 aa)) folds into the STAS domain.

This sequence belongs to the SLC26A/SulP transporter (TC 2.A.53) family.

The protein localises to the membrane. High-affinity H(+)/sulfate cotransporter that mediates the uptake of sulfate by plant roots from low concentrations of sulfate in the soil solution. This Stylosanthes hamata (Caribbean stylo) protein is High affinity sulfate transporter 2 (ST2).